Reading from the N-terminus, the 328-residue chain is Diaminopimelate epimerase (328 aa).

2 residues coordinate substrate: N14 and N73. The active-site Proton donor is C82. Substrate is bound by residues 83–84, N170, N206, and 224–225; these read GN and ER. C233 (proton acceptor) is an active-site residue. Residue 234–235 coordinates substrate; that stretch reads GT.

It belongs to the diaminopimelate epimerase family. As to quaternary structure, homodimer.

It localises to the cytoplasm. It carries out the reaction (2S,6S)-2,6-diaminopimelate = meso-2,6-diaminopimelate. Its pathway is amino-acid biosynthesis; L-lysine biosynthesis via DAP pathway; DL-2,6-diaminopimelate from LL-2,6-diaminopimelate: step 1/1. In terms of biological role, catalyzes the stereoinversion of LL-2,6-diaminopimelate (L,L-DAP) to meso-diaminopimelate (meso-DAP), a precursor of L-lysine and an essential component of the bacterial peptidoglycan. In Listeria welshimeri serovar 6b (strain ATCC 35897 / DSM 20650 / CCUG 15529 / CIP 8149 / NCTC 11857 / SLCC 5334 / V8), this protein is Diaminopimelate epimerase.